Here is a 334-residue protein sequence, read N- to C-terminus: Ketol-acid reductoisomerase (NADP(+)) (334 aa).

A KARI N-terminal Rossmann domain is found at Met1–Thr181. NADP(+)-binding positions include Tyr25–Gln28, Arg48, Ser52, and Asp82–Gln85. The active site involves His107. NADP(+) is bound at residue Gly133. The KARI C-terminal knotted domain occupies Ser182–Ile327. Positions 190, 194, 226, and 230 each coordinate Mg(2+). Substrate is bound at residue Ser251.

It belongs to the ketol-acid reductoisomerase family. It depends on Mg(2+) as a cofactor.

The catalysed reaction is (2R)-2,3-dihydroxy-3-methylbutanoate + NADP(+) = (2S)-2-acetolactate + NADPH + H(+). It carries out the reaction (2R,3R)-2,3-dihydroxy-3-methylpentanoate + NADP(+) = (S)-2-ethyl-2-hydroxy-3-oxobutanoate + NADPH + H(+). Its pathway is amino-acid biosynthesis; L-isoleucine biosynthesis; L-isoleucine from 2-oxobutanoate: step 2/4. The protein operates within amino-acid biosynthesis; L-valine biosynthesis; L-valine from pyruvate: step 2/4. Its function is as follows. Involved in the biosynthesis of branched-chain amino acids (BCAA). Catalyzes an alkyl-migration followed by a ketol-acid reduction of (S)-2-acetolactate (S2AL) to yield (R)-2,3-dihydroxy-isovalerate. In the isomerase reaction, S2AL is rearranged via a Mg-dependent methyl migration to produce 3-hydroxy-3-methyl-2-ketobutyrate (HMKB). In the reductase reaction, this 2-ketoacid undergoes a metal-dependent reduction by NADPH to yield (R)-2,3-dihydroxy-isovalerate. The chain is Ketol-acid reductoisomerase (NADP(+)) from Staphylococcus saprophyticus subsp. saprophyticus (strain ATCC 15305 / DSM 20229 / NCIMB 8711 / NCTC 7292 / S-41).